Here is a 169-residue protein sequence, read N- to C-terminus: S-ribosylhomocysteine lyase (169 aa).

Positions 54, 58, and 128 each coordinate Fe cation.

The protein belongs to the LuxS family. In terms of assembly, homodimer. The cofactor is Fe cation.

It catalyses the reaction S-(5-deoxy-D-ribos-5-yl)-L-homocysteine = (S)-4,5-dihydroxypentane-2,3-dione + L-homocysteine. Functionally, involved in the synthesis of autoinducer 2 (AI-2) which is secreted by bacteria and is used to communicate both the cell density and the metabolic potential of the environment. The regulation of gene expression in response to changes in cell density is called quorum sensing. Catalyzes the transformation of S-ribosylhomocysteine (RHC) to homocysteine (HC) and 4,5-dihydroxy-2,3-pentadione (DPD). This chain is S-ribosylhomocysteine lyase, found in Tolumonas auensis (strain DSM 9187 / NBRC 110442 / TA 4).